A 385-amino-acid polypeptide reads, in one-letter code: S-adenosylmethionine synthase (385 aa).

Residue His16 coordinates ATP. Asp18 is a binding site for Mg(2+). Residue Glu44 participates in K(+) binding. L-methionine is bound by residues Glu57 and Gln100. The flexible loop stretch occupies residues 100–110 (QSPDINQGVDR). ATP-binding positions include 164–166 (DGK), 230–231 (KF), Asp239, 245–246 (RK), Ala262, and Lys266. Asp239 lines the L-methionine pocket. L-methionine is bound at residue Lys270.

The protein belongs to the AdoMet synthase family. As to quaternary structure, homotetramer; dimer of dimers. Requires Mg(2+) as cofactor. The cofactor is K(+).

Its subcellular location is the cytoplasm. The catalysed reaction is L-methionine + ATP + H2O = S-adenosyl-L-methionine + phosphate + diphosphate. It participates in amino-acid biosynthesis; S-adenosyl-L-methionine biosynthesis; S-adenosyl-L-methionine from L-methionine: step 1/1. Catalyzes the formation of S-adenosylmethionine (AdoMet) from methionine and ATP. The overall synthetic reaction is composed of two sequential steps, AdoMet formation and the subsequent tripolyphosphate hydrolysis which occurs prior to release of AdoMet from the enzyme. This Helicobacter pylori (strain HPAG1) protein is S-adenosylmethionine synthase.